The chain runs to 81 residues: Delta-actitoxin-Aeq2d (81 aa).

A signal peptide spans 1–19 (MNRLMILVFAAVILALASA). A propeptide spanning residues 20 to 25 (DDVDIA) is cleaved from the precursor. 3 disulfide bridges follow: Cys31–Cys78, Cys33–Cys68, and Cys61–Cys79.

Belongs to the sea anemone sodium channel inhibitory toxin family. Type I subfamily.

The protein resides in the secreted. Its subcellular location is the nematocyst. Binds specifically to voltage-gated sodium channels (Nav), thereby delaying their inactivation during signal transduction. Causes death to crabs. In Actinia equina (Beadlet anemone), this protein is Delta-actitoxin-Aeq2d.